The chain runs to 162 residues: Phosphopantetheine adenylyltransferase (162 aa).

A substrate-binding site is contributed by S9. ATP is bound by residues S9–F10 and H17. 3 residues coordinate substrate: K41, I77, and K91. ATP-binding positions include G92–R94, E102, and Y126–S132.

This sequence belongs to the bacterial CoaD family. As to quaternary structure, homohexamer. Mg(2+) serves as cofactor.

The protein resides in the cytoplasm. It catalyses the reaction (R)-4'-phosphopantetheine + ATP + H(+) = 3'-dephospho-CoA + diphosphate. It functions in the pathway cofactor biosynthesis; coenzyme A biosynthesis; CoA from (R)-pantothenate: step 4/5. Reversibly transfers an adenylyl group from ATP to 4'-phosphopantetheine, yielding dephospho-CoA (dPCoA) and pyrophosphate. In Frankia casuarinae (strain DSM 45818 / CECT 9043 / HFP020203 / CcI3), this protein is Phosphopantetheine adenylyltransferase.